We begin with the raw amino-acid sequence, 844 residues long: Janus kinase and microtubule-interacting protein 3 (844 aa).

Residues 8–258 (SRAKGDKAEA…QLSQVREADR (251 aa)) adopt a coiled-coil conformation. Residues 250 to 290 (LSQVREADRHPGSPRRELPHAAGAGDASDHSGSPEQQLDEK) are disordered. Over residues 254–268 (READRHPGSPRRELP) the composition is skewed to basic and acidic residues. Positions 269 to 282 (HAAGAGDASDHSGS) are enriched in low complexity. Positions 289-421 (EKDARRFQLK…DELSKTLETA (133 aa)) form a coiled coil. Position 384 is a phosphoserine (Ser-384). Positions 466–483 (SDGSSVSYQTDRTDQTPC) are enriched in polar residues. A disordered region spans residues 466–489 (SDGSSVSYQTDRTDQTPCTPDDDL). Coiled-coil stretches lie at residues 493–621 (MAKE…RERK) and 683–834 (VLTL…FLFL).

Belongs to the JAKMIP family. As to expression, specifically expressed in the CNS and endocrine tissues. Also detected in other tissues including heart, testis and prostate.

It localises to the golgi apparatus. This is Janus kinase and microtubule-interacting protein 3 (JAKMIP3) from Homo sapiens (Human).